A 213-amino-acid polypeptide reads, in one-letter code: Probable nicotinate-nucleotide adenylyltransferase (213 aa).

The protein belongs to the NadD family.

It catalyses the reaction nicotinate beta-D-ribonucleotide + ATP + H(+) = deamido-NAD(+) + diphosphate. The protein operates within cofactor biosynthesis; NAD(+) biosynthesis; deamido-NAD(+) from nicotinate D-ribonucleotide: step 1/1. Catalyzes the reversible adenylation of nicotinate mononucleotide (NaMN) to nicotinic acid adenine dinucleotide (NaAD). The polypeptide is Probable nicotinate-nucleotide adenylyltransferase (Trichlorobacter lovleyi (strain ATCC BAA-1151 / DSM 17278 / SZ) (Geobacter lovleyi)).